A 265-amino-acid polypeptide reads, in one-letter code: Exosome complex component RRP42 (265 aa).

Belongs to the RNase PH family. As to quaternary structure, component of the RNA exosome complex. Specifically part of the catalytically inactive RNA exosome core complex (Exo-9) which may associate with the catalytic subunits RRP6 and DIS3 in cytoplasmic- and nuclear-specific RNA exosome complex forms. Exo-9 is formed by a hexameric base ring of RNase PH domain-containing subunits and a cap ring consisting of CSL4, RRP4 and RRP40.

Its subcellular location is the cytoplasm. The protein resides in the nucleus. It is found in the nucleolus. Functionally, non-catalytic component of the RNA exosome complex which has 3'-&gt;5' exoribonuclease activity and participates in a multitude of cellular RNA processing and degradation events. In the nucleus, the RNA exosome complex is involved in proper maturation of stable RNA species such as rRNA, snRNA and snoRNA, in the elimination of RNA processing by-products and non-coding 'pervasive' transcripts, such as antisense RNA species and cryptic unstable transcripts (CUTs), and of mRNAs with processing defects, thereby limiting or excluding their export to the cytoplasm. In the cytoplasm, the RNA exosome complex is involved in general mRNA turnover and in RNA surveillance pathways, preventing translation of aberrant mRNAs. The catalytic inactive RNA exosome core complex of 9 subunits (Exo-9) is proposed to play a pivotal role in the binding and presentation of RNA for ribonucleolysis, and to serve as a scaffold for the association with catalytic subunits and accessory proteins or complexes. RRP42 is part of the hexameric ring of RNase PH domain-containing subunits proposed to form a central channel which threads RNA substrates for degradation. This is Exosome complex component RRP42 (RRP42) from Saccharomyces cerevisiae (strain ATCC 204508 / S288c) (Baker's yeast).